The sequence spans 96 residues: Translation initiation factor 1A 1 (96 aa).

An S1-like domain is found at 8 to 82 (GSHDLRMPDD…EKGDITWRYE (75 aa)).

This sequence belongs to the eIF-1A family.

In terms of biological role, seems to be required for maximal rate of protein biosynthesis. Enhances ribosome dissociation into subunits and stabilizes the binding of the initiator Met-tRNA(I) to 40 S ribosomal subunits. This chain is Translation initiation factor 1A 1, found in Haloquadratum walsbyi (strain DSM 16790 / HBSQ001).